A 1058-amino-acid polypeptide reads, in one-letter code: Carbamoyl phosphate synthase large chain (1058 aa).

Residues 1–401 are carboxyphosphate synthetic domain; it reads MAKRTDIKKI…CLLKACRSLE (401 aa). Residues R129, R169, G175, G176, R208, I210, E215, G241, I242, H243, Q284, and E298 each coordinate ATP. Residues 133–327 enclose the ATP-grasp 1 domain; it reads KQLMKELGEP…IAKIAAKIAV (195 aa). 3 residues coordinate Mg(2+): Q284, E298, and N300. Positions 284, 298, and 300 each coordinate Mn(2+). Residues 402–546 form an oligomerization domain region; that stretch reads IGVDHNELKG…YSTYEWENES (145 aa). The segment at 547-929 is carbamoyl phosphate synthetic domain; sequence IKSEKESVIV…ALYKAFEASY (383 aa). Residues 671–861 form the ATP-grasp 2 domain; sequence EKALKDLGIP…MAQVATKLIL (191 aa). The ATP site is built by R707, S746, I748, E752, G777, V778, H779, S780, Q820, and E832. The Mg(2+) site is built by Q820, E832, and N834. The Mn(2+) site is built by Q820, E832, and N834. Residues 930–1058 enclose the MGS-like domain; that stretch reads LHMPEYGTIV…ESRTFSIEAI (129 aa). Positions 930–1058 are allosteric domain; sequence LHMPEYGTIV…ESRTFSIEAI (129 aa).

The protein belongs to the CarB family. Composed of two chains; the small (or glutamine) chain promotes the hydrolysis of glutamine to ammonia, which is used by the large (or ammonia) chain to synthesize carbamoyl phosphate. Tetramer of heterodimers (alpha,beta)4. Mg(2+) serves as cofactor. Requires Mn(2+) as cofactor.

The enzyme catalyses hydrogencarbonate + L-glutamine + 2 ATP + H2O = carbamoyl phosphate + L-glutamate + 2 ADP + phosphate + 2 H(+). The catalysed reaction is hydrogencarbonate + NH4(+) + 2 ATP = carbamoyl phosphate + 2 ADP + phosphate + 2 H(+). Its pathway is amino-acid biosynthesis; L-arginine biosynthesis; carbamoyl phosphate from bicarbonate: step 1/1. It functions in the pathway pyrimidine metabolism; UMP biosynthesis via de novo pathway; (S)-dihydroorotate from bicarbonate: step 1/3. Functionally, large subunit of the glutamine-dependent carbamoyl phosphate synthetase (CPSase). CPSase catalyzes the formation of carbamoyl phosphate from the ammonia moiety of glutamine, carbonate, and phosphate donated by ATP, constituting the first step of 2 biosynthetic pathways, one leading to arginine and/or urea and the other to pyrimidine nucleotides. The large subunit (synthetase) binds the substrates ammonia (free or transferred from glutamine from the small subunit), hydrogencarbonate and ATP and carries out an ATP-coupled ligase reaction, activating hydrogencarbonate by forming carboxy phosphate which reacts with ammonia to form carbamoyl phosphate. The protein is Carbamoyl phosphate synthase large chain of Streptococcus equi subsp. zooepidemicus (strain H70).